The primary structure comprises 1220 residues: von Willebrand factor A domain-containing protein 5B1 (1220 aa).

The N-terminal stretch at 1–18 (MPGLLNWITGAALPLTAS) is a signal peptide. The 131-residue stretch at 19-149 (DVTSCVSGYA…NVTIFISTSS (131 aa)) folds into the VIT domain. Residue asparagine 140 is glycosylated (N-linked (GlcNAc...) asparagine). Residues 361–529 (EFIFLIDRSS…RLQPKMVKSL (169 aa)) form the VWFA domain. N-linked (GlcNAc...) asparagine glycosylation occurs at asparagine 650. The segment at 715 to 807 (NSGQDLNQGP…SPSRPATPAP (93 aa)) is disordered. Residues 757–774 (VRERTSDSRSPGDLEPSH) are compositionally biased toward basic and acidic residues. A compositionally biased stretch (low complexity) spans 796 to 807 (RASPSRPATPAP). Residue tyrosine 881 is modified to Phosphotyrosine. 2 disordered regions span residues 937–962 (RGTS…GKFQ) and 976–995 (EARS…QRSL). Asparagine 1017 is a glycosylation site (N-linked (GlcNAc...) asparagine). The segment covering 1093–1111 (TTRPSESKTPSPQLCTSSP) has biased composition (polar residues). Residues 1093-1115 (TTRPSESKTPSPQLCTSSPPRHP) are disordered.

The protein resides in the secreted. This chain is von Willebrand factor A domain-containing protein 5B1 (VWA5B1), found in Homo sapiens (Human).